The following is a 93-amino-acid chain: Large ribosomal subunit protein uL23 (93 aa).

Belongs to the universal ribosomal protein uL23 family. In terms of assembly, part of the 50S ribosomal subunit. Contacts protein L29, and trigger factor when it is bound to the ribosome.

One of the early assembly proteins it binds 23S rRNA. One of the proteins that surrounds the polypeptide exit tunnel on the outside of the ribosome. Forms the main docking site for trigger factor binding to the ribosome. The chain is Large ribosomal subunit protein uL23 from Natranaerobius thermophilus (strain ATCC BAA-1301 / DSM 18059 / JW/NM-WN-LF).